The following is a 470-amino-acid chain: Ubiquitin carboxyl-terminal hydrolase calypso (470 aa).

The 231-residue stretch at 11-241 (GWLELESDPG…ITHKLKMLRT (231 aa)) folds into the UCH catalytic domain. The active-site Nucleophile is the Cys-98. His-177 functions as the Proton donor in the catalytic mechanism. Residues 260–280 (ESRSQAEIRETVDKIKKEEQE) adopt a coiled-coil conformation. The ULD domain occupies 392-420 (NYDEFICTFLSMLAYQGELGDLVTQHLVT). The segment at 422–470 (RKPSLGGVQNSGSRGVVRNYNKKSTTNGSSPKTPSSKRRRGRTKYRKRK) is positively charged C-terminal tail required for binding nucleosomes. Polar residues predominate over residues 423 to 434 (KPSLGGVQNSGS). Residues 423–470 (KPSLGGVQNSGSRGVVRNYNKKSTTNGSSPKTPSSKRRRGRTKYRKRK) form a disordered region. Residues 456–470 (SSKRRRGRTKYRKRK) are compositionally biased toward basic residues.

It belongs to the peptidase C12 family. BAP1 subfamily. Catalytic component of the polycomb repressive deubiquitinase (PR-DUB) complex, at least composed of caly/calypso, Asx and sba (MBD5/6 homolog). The PR-DUB complex associates with nucleosomes to mediate deubiquitination of histone H2AK118ub1 substrates; the association requires the positively charged C-terminal tail of caly, probably due to direct binding of DNA. Interacts (via ULD domain) with Asx (via DEUBAD domain); the interaction produces a stable heterodimer with a composite binding site for ubiquitin. Homodimerizes (via coiled-coil hinge-region between the UCH and ULD domains) to mediate assembly of 2 copies of the caly-Asx heterodimer into a bisymmetric tetramer; dimerization enhances PR-DUB association with nucleosomes.

Its subcellular location is the nucleus. It catalyses the reaction Thiol-dependent hydrolysis of ester, thioester, amide, peptide and isopeptide bonds formed by the C-terminal Gly of ubiquitin (a 76-residue protein attached to proteins as an intracellular targeting signal).. Its function is as follows. Catalytic component of the polycomb repressive deubiquitinase (PR-DUB) complex, a complex that specifically mediates deubiquitination of histone H2A monoubiquitinated at 'Lys-119' (H2AK118ub1). Mediates bisymmetric organization of the PR-DUB complex and is involved in association with nucleosomes to mediate deubiquitination. Does not deubiquitinate monoubiquitinated histone H2B. Required to maintain the transcriptionally repressive state of homeotic genes throughout development. The PR-DUB complex has weak or no activity toward 'Lys-48'- and 'Lys-63'-linked polyubiquitin chains. Polycomb group (PcG) protein. This chain is Ubiquitin carboxyl-terminal hydrolase calypso, found in Culex quinquefasciatus (Southern house mosquito).